We begin with the raw amino-acid sequence, 464 residues long: GDNF family receptor alpha-2 (464 aa).

The first 21 residues, 1–21 (MILANAFCLFFFLDETLRSLA), serve as a signal peptide directing secretion. Disulfide bonds link cysteine 40/cysteine 93, cysteine 47/cysteine 53, cysteine 63/cysteine 78, cysteine 95/cysteine 105, cysteine 161/cysteine 222, cysteine 168/cysteine 174, cysteine 185/cysteine 200, cysteine 195/cysteine 241, cysteine 224/cysteine 229, cysteine 251/cysteine 323, cysteine 258/cysteine 264, cysteine 275/cysteine 293, cysteine 285/cysteine 347, and cysteine 325/cysteine 335. An N-linked (GlcNAc...) asparagine glycan is attached at asparagine 52. N-linked (GlcNAc...) asparagine glycosylation is present at asparagine 357. The segment at 363-392 (MSPKGPTFSATQAPRVEKTPSLPDDLSDST) is disordered. The span at 381 to 392 (TPSLPDDLSDST) shows a compositional bias: low complexity. Asparagine 413 is a glycosylation site (N-linked (GlcNAc...) asparagine). Serine 443 carries the GPI-anchor amidated serine lipid modification. Residues 444–464 (CRARLSTALTALPLLMVTLAQ) constitute a propeptide, removed in mature form.

It belongs to the GDNFR family. As to quaternary structure, interacts with NRTN ligand and RET: forms a 2:2:2 ternary complex composed of NRTN ligand, GFRA2 and RET receptor. Also forms a 4:4:4 tetrameric complex composed of 4 copies of NRTN ligand, GFRA2 and RET receptor, which prevents endocytosis of RET. Interacts with SORL1. In terms of tissue distribution, neurons of the superior cervical and dorsal root ganglia, and adult brain and testis. Low level in the substantia nigra, spleen and adrenal gland. Isoform 1, isoform 2 and isoform 3 are all expressed in brain, liver, ileum, spleen, heart and kidney. In brain, isoform 1 is most abundant, isoform 2 slightly less and isoform 3 is lowest. No significant levels of isoform 1, isoform 2 or isoform 3 expression in testis.

It is found in the cell membrane. Functionally, receptor for neurturin (NRTN), a growth factor that supports the survival of sympathetic neurons. NRTN-binding leads to autophosphorylation and activation of the RET receptor. Also able to mediate GDNF signaling through the RET tyrosine kinase receptor. Participates in NRTN-induced 'Ser-727' phosphorylation of STAT3. This Mus musculus (Mouse) protein is GDNF family receptor alpha-2.